Reading from the N-terminus, the 117-residue chain is Large ribosomal subunit protein bL20c (117 aa).

This sequence belongs to the bacterial ribosomal protein bL20 family.

Its subcellular location is the plastid. It localises to the chloroplast. Binds directly to 23S ribosomal RNA and is necessary for the in vitro assembly process of the 50S ribosomal subunit. It is not involved in the protein synthesizing functions of that subunit. In Aethionema grandiflorum (Persian stone-cress), this protein is Large ribosomal subunit protein bL20c.